Consider the following 302-residue polypeptide: Glycine--tRNA ligase alpha subunit (302 aa).

This sequence belongs to the class-II aminoacyl-tRNA synthetase family. Tetramer of two alpha and two beta subunits.

Its subcellular location is the cytoplasm. The catalysed reaction is tRNA(Gly) + glycine + ATP = glycyl-tRNA(Gly) + AMP + diphosphate. This is Glycine--tRNA ligase alpha subunit from Xanthomonas euvesicatoria pv. vesicatoria (strain 85-10) (Xanthomonas campestris pv. vesicatoria).